A 190-amino-acid polypeptide reads, in one-letter code: Crossover junction endodeoxyribonuclease RuvC (190 aa).

Active-site residues include Asp8, Glu67, and Asp139. Asp8, Glu67, and Asp139 together coordinate Mg(2+).

The protein belongs to the RuvC family. As to quaternary structure, homodimer which binds Holliday junction (HJ) DNA. The HJ becomes 2-fold symmetrical on binding to RuvC with unstacked arms; it has a different conformation from HJ DNA in complex with RuvA. In the full resolvosome a probable DNA-RuvA(4)-RuvB(12)-RuvC(2) complex forms which resolves the HJ. Mg(2+) is required as a cofactor.

It is found in the cytoplasm. It catalyses the reaction Endonucleolytic cleavage at a junction such as a reciprocal single-stranded crossover between two homologous DNA duplexes (Holliday junction).. In terms of biological role, the RuvA-RuvB-RuvC complex processes Holliday junction (HJ) DNA during genetic recombination and DNA repair. Endonuclease that resolves HJ intermediates. Cleaves cruciform DNA by making single-stranded nicks across the HJ at symmetrical positions within the homologous arms, yielding a 5'-phosphate and a 3'-hydroxyl group; requires a central core of homology in the junction. The consensus cleavage sequence is 5'-(A/T)TT(C/G)-3'. Cleavage occurs on the 3'-side of the TT dinucleotide at the point of strand exchange. HJ branch migration catalyzed by RuvA-RuvB allows RuvC to scan DNA until it finds its consensus sequence, where it cleaves and resolves the cruciform DNA. This is Crossover junction endodeoxyribonuclease RuvC from Pasteurella multocida (strain Pm70).